The primary structure comprises 233 residues: 7-cyano-7-deazaguanine synthase (233 aa).

11–21 (LSGGLDSSTVL) contacts ATP. Zn(2+) is bound by residues C195, C203, C206, and C209.

The protein belongs to the QueC family. It depends on Zn(2+) as a cofactor.

It catalyses the reaction 7-carboxy-7-deazaguanine + NH4(+) + ATP = 7-cyano-7-deazaguanine + ADP + phosphate + H2O + H(+). It participates in purine metabolism; 7-cyano-7-deazaguanine biosynthesis. Its function is as follows. Catalyzes the ATP-dependent conversion of 7-carboxy-7-deazaguanine (CDG) to 7-cyano-7-deazaguanine (preQ(0)). The protein is 7-cyano-7-deazaguanine synthase of Thermosynechococcus vestitus (strain NIES-2133 / IAM M-273 / BP-1).